The sequence spans 119 residues: Large ribosomal subunit protein bL20 (119 aa).

The protein belongs to the bacterial ribosomal protein bL20 family.

Its function is as follows. Binds directly to 23S ribosomal RNA and is necessary for the in vitro assembly process of the 50S ribosomal subunit. It is not involved in the protein synthesizing functions of that subunit. The polypeptide is Large ribosomal subunit protein bL20 (Geobacillus sp. (strain WCH70)).